Reading from the N-terminus, the 136-residue chain is Histone H3.2 (136 aa).

The segment at 1–43 (MARTKQTARKSTGGKAPRKQLATKAARKSAPATGGVKKPHRFR) is disordered. Lysine 5 is subject to N6-methylated lysine. N6-acetyllysine; alternate is present on lysine 10. N6-methylated lysine; alternate is present on lysine 10. Serine 11 carries the phosphoserine modification. The residue at position 12 (threonine 12) is a Phosphothreonine. Residue lysine 15 is modified to N6-acetyllysine. An N6-acetyllysine; alternate mark is found at lysine 19 and lysine 24. N6-methylated lysine; alternate is present on residues lysine 19 and lysine 24. Lysine 28 bears the N6-methylated lysine mark. Position 29 is a phosphoserine (serine 29). An N6-methylated lysine modification is found at lysine 37.

Belongs to the histone H3 family. As to quaternary structure, the nucleosome is a histone octamer containing two molecules each of H2A, H2B, H3 and H4 assembled in one H3-H4 heterotetramer and two H2A-H2B heterodimers. The octamer wraps approximately 147 bp of DNA. In terms of processing, acetylation is generally linked to gene activation. Can be acetylated to form H3K9ac, H3K14ac, H3K18ac and H3K23ac. H3K9ac could compete with H3K9me and prevent gene silencing. H3K9ac is restricted to euchromatin. Post-translationally, methylated to form mainly H3K4me, H3K9me, H3K18me, H3K23me, H3K27me and H3K36me. H3K4me1/2/3, H3K9me3, H3K27me3 and H3K36me1/2/3 are typical marks for euchromatin, whereas heterochromatic chromocenters are enriched in H3K9me1/2 and H3K27me1/2. H2BK143ub1 is probably prerequisite for H3K4me. Can be phosphorylated to form H3S10ph, H3T11ph and H3S28ph. As to expression, expressed in bicellular pollen, root tips, shoot apices, young leaves and ovules.

Its subcellular location is the nucleus. The protein localises to the nucleolus. It localises to the chromosome. Its function is as follows. Core component of nucleosome. Nucleosomes wrap and compact DNA into chromatin, limiting DNA accessibility to the cellular machineries which require DNA as a template. Histones thereby play a central role in transcription regulation, DNA repair, DNA replication and chromosomal stability. DNA accessibility is regulated via a complex set of post-translational modifications of histones, also called histone code, and nucleosome remodeling. This chain is Histone H3.2 (YAH3), found in Lilium longiflorum (Trumpet lily).